The following is a 459-amino-acid chain: Exodeoxyribonuclease 7 large subunit (459 aa).

Belongs to the XseA family. Heterooligomer composed of large and small subunits.

It is found in the cytoplasm. The enzyme catalyses Exonucleolytic cleavage in either 5'- to 3'- or 3'- to 5'-direction to yield nucleoside 5'-phosphates.. Its function is as follows. Bidirectionally degrades single-stranded DNA into large acid-insoluble oligonucleotides, which are then degraded further into small acid-soluble oligonucleotides. The protein is Exodeoxyribonuclease 7 large subunit of Pseudomonas entomophila (strain L48).